Reading from the N-terminus, the 180-residue chain is Immediate early response gene 2 protein (180 aa).

The segment at 53 to 135 is disordered; sequence MSEKSGQSVT…KRRSKTATDS (83 aa). Over residues 56–92 the composition is skewed to polar residues; that stretch reads KSGQSVTEECTSHTQEPMDTSSSTATPLRETSGQSSE. The segment covering 93–103 has biased composition (basic and acidic residues); it reads DGQRSGLEGHP.

Belongs to the IER family. In terms of assembly, interacts with FIBPB.

It localises to the nucleus. The protein resides in the cytoplasm. DNA-binding protein that seems to act as a transcription factor. Mediates with FIBPB FGF-signaling in Kupffer's vesicle ciliogenesis and in the establishment of laterality in the embryo. This Danio rerio (Zebrafish) protein is Immediate early response gene 2 protein.